Consider the following 398-residue polypeptide: Histidinol-phosphate aminotransferase (398 aa).

The span at 1-10 (MTGQRATPQP) shows a compositional bias: polar residues. Residues 1–30 (MTGQRATPQPTLDDLPLRDDLRGKSPYGAP) form a disordered region. Lysine 234 carries the N6-(pyridoxal phosphate)lysine modification.

This sequence belongs to the class-II pyridoxal-phosphate-dependent aminotransferase family. Histidinol-phosphate aminotransferase subfamily. As to quaternary structure, homodimer. The cofactor is pyridoxal 5'-phosphate.

It catalyses the reaction L-histidinol phosphate + 2-oxoglutarate = 3-(imidazol-4-yl)-2-oxopropyl phosphate + L-glutamate. Its pathway is amino-acid biosynthesis; L-histidine biosynthesis; L-histidine from 5-phospho-alpha-D-ribose 1-diphosphate: step 7/9. This chain is Histidinol-phosphate aminotransferase, found in Mycobacterium avium (strain 104).